The sequence spans 101 residues: Urease subunit beta (101 aa).

This sequence belongs to the urease beta subunit family. Heterotrimer of UreA (gamma), UreB (beta) and UreC (alpha) subunits. Three heterotrimers associate to form the active enzyme.

The protein localises to the cytoplasm. It carries out the reaction urea + 2 H2O + H(+) = hydrogencarbonate + 2 NH4(+). The protein operates within nitrogen metabolism; urea degradation; CO(2) and NH(3) from urea (urease route): step 1/1. This is Urease subunit beta from Burkholderia ambifaria (strain MC40-6).